Reading from the N-terminus, the 636-residue chain is Fructose-1,6-bisphosphatase class 3 (636 aa).

Belongs to the FBPase class 3 family. Mn(2+) serves as cofactor.

The enzyme catalyses beta-D-fructose 1,6-bisphosphate + H2O = beta-D-fructose 6-phosphate + phosphate. It functions in the pathway carbohydrate biosynthesis; gluconeogenesis. In Streptococcus sanguinis (strain SK36), this protein is Fructose-1,6-bisphosphatase class 3.